Consider the following 463-residue polypeptide: MSLPTMDKPVRQLFGTDGIRGVAGEYPLDPHTVFAIGRALGARLVEKYQTARVLIGQDTRESSDWISRALARGLESANCGVASAGVITTPGVAYLTRTHGFSAGIVVSASHNPWTDNGIKVFGANGYKLSDDIEHEIEAQIFYHLEELERAESEGEGPAMLPGDDKLREDYAEWLRSQVEGTDFSKFRVLLDCANGAASSIAHLVFPKVGVFSEFTHICPTGRNINANCGALHPEEAAKHVGQSRGRFDLGITFDGDADRALFSDGDGNIVNGDAVLLLAARDMKARGHLKEDTVVATTMSNMGLEAALKRSGIRMLRAAVGDKYVLEEMKKTGATLGGEQSGHILFMDSDATTGDGILTALRVLEVLARSGKSLAELIADLKVFPQVIRNVKVNAKIPMKELPAVMSAIEAAEQDLGDSGRVVVRYSGTEKLARVMIEAESEAKMNQHATAIAEAIQEAIGI.

S110 serves as the catalytic Phosphoserine intermediate. Residues S110, D255, D257, and D259 each coordinate Mg(2+). At S110 the chain carries Phosphoserine.

Belongs to the phosphohexose mutase family. It depends on Mg(2+) as a cofactor. Post-translationally, activated by phosphorylation.

It catalyses the reaction alpha-D-glucosamine 1-phosphate = D-glucosamine 6-phosphate. Catalyzes the conversion of glucosamine-6-phosphate to glucosamine-1-phosphate. The sequence is that of Phosphoglucosamine mutase from Koribacter versatilis (strain Ellin345).